Reading from the N-terminus, the 289-residue chain is 4-hydroxybenzoate octaprenyltransferase (289 aa).

The next 8 helical transmembrane spans lie at 21 to 40 (PIGTLLLLWPTLWALWLAAG), 95 to 115 (VLALFAVLALISFALVLTMNS), 116 to 136 (LTIALSFAALLLAVCYPFMKR), 138 to 158 (IPIPQLVLGMAFSWSIPMAYA), 161 to 181 (ANALPLVAWLVFLANLLWTIA), 213 to 233 (IIGVLQLATLLILLAVGQLMG), 236 to 256 (AWYYWGLLGAAALFVYQQRLI), and 268 to 288 (FLNNNYAGALVFIGLVLNYLL).

It belongs to the UbiA prenyltransferase family. Mg(2+) serves as cofactor.

The protein localises to the cell inner membrane. The enzyme catalyses all-trans-octaprenyl diphosphate + 4-hydroxybenzoate = 4-hydroxy-3-(all-trans-octaprenyl)benzoate + diphosphate. It functions in the pathway cofactor biosynthesis; ubiquinone biosynthesis. Catalyzes the prenylation of para-hydroxybenzoate (PHB) with an all-trans polyprenyl group. Mediates the second step in the final reaction sequence of ubiquinone-8 (UQ-8) biosynthesis, which is the condensation of the polyisoprenoid side chain with PHB, generating the first membrane-bound Q intermediate 3-octaprenyl-4-hydroxybenzoate. This Aeromonas salmonicida (strain A449) protein is 4-hydroxybenzoate octaprenyltransferase.